The primary structure comprises 183 residues: Adenine phosphoribosyltransferase (183 aa).

The protein belongs to the purine/pyrimidine phosphoribosyltransferase family. As to quaternary structure, homodimer.

The protein localises to the cytoplasm. The catalysed reaction is AMP + diphosphate = 5-phospho-alpha-D-ribose 1-diphosphate + adenine. It participates in purine metabolism; AMP biosynthesis via salvage pathway; AMP from adenine: step 1/1. Its function is as follows. Catalyzes a salvage reaction resulting in the formation of AMP, that is energically less costly than de novo synthesis. This Proteus mirabilis (strain HI4320) protein is Adenine phosphoribosyltransferase.